The sequence spans 226 residues: MTTANPGDRLGLLGRKVGMMRIFTDDGDAVPVTVLDVSNNRVTQVKTVETDGYSAIQVTFGARKASRVTKPEAGHLAKAGVEAGEILREFAVSAEVAAEYKPGGTLPVGLFAAGQKVDVQGTSIGKGFTGTIKRHNFGSQRASHGNSRSHNVPGSISMAQDPGRVFPGKKMSGHRGDVTKTTQNLDIVRVDEARQLLLVRGAVPGAKNGFVTVRPAVKVKAKKGAN.

The segment at 136–162 is disordered; sequence NFGSQRASHGNSRSHNVPGSISMAQDP. Over residues 137-158 the composition is skewed to polar residues; sequence FGSQRASHGNSRSHNVPGSISM. At glutamine 160 the chain carries N5-methylglutamine.

This sequence belongs to the universal ribosomal protein uL3 family. As to quaternary structure, part of the 50S ribosomal subunit. Forms a cluster with proteins L14 and L19. Methylated by PrmB.

One of the primary rRNA binding proteins, it binds directly near the 3'-end of the 23S rRNA, where it nucleates assembly of the 50S subunit. The protein is Large ribosomal subunit protein uL3 of Methylibium petroleiphilum (strain ATCC BAA-1232 / LMG 22953 / PM1).